Consider the following 339-residue polypeptide: 1-aminocyclopropane-1-carboxylate deaminase (339 aa).

Lys52 carries the N6-(pyridoxal phosphate)lysine modification. Ser79 serves as the catalytic Nucleophile.

It belongs to the ACC deaminase/D-cysteine desulfhydrase family. Homotrimer. Pyridoxal 5'-phosphate is required as a cofactor.

The enzyme catalyses 1-aminocyclopropane-1-carboxylate + H2O = 2-oxobutanoate + NH4(+). Functionally, catalyzes a cyclopropane ring-opening reaction, the irreversible conversion of 1-aminocyclopropane-1-carboxylate (ACC) to ammonia and alpha-ketobutyrate. Allows growth on ACC as a nitrogen source. The protein is 1-aminocyclopropane-1-carboxylate deaminase of Rhizobium leguminosarum bv. viciae.